We begin with the raw amino-acid sequence, 68 residues long: Conotoxin Mr3.4 (68 aa).

The first 19 residues, 1 to 19 (MSKLGVLLTICLLLFPLTA), serve as a signal peptide directing secretion. The propeptide occupies 20 to 49 (VPLDGDQPADRPAERMQDDISSERHPFFDR). 3 disulfides stabilise this stretch: Cys-53/Cys-67, Cys-54/Cys-63, and Cys-59/Cys-66. Residue Pro-65 is modified to 4-hydroxyproline.

The protein belongs to the conotoxin M superfamily. In terms of tissue distribution, expressed by the venom duct.

It is found in the secreted. This Conus marmoreus (Marble cone) protein is Conotoxin Mr3.4.